The sequence spans 489 residues: Rhamnulokinase (489 aa).

13–17 lines the ATP pocket; it reads ASSGR. A disulfide bond links Cys-68 and Cys-222. Substrate contacts are provided by residues Gly-83 and 236 to 238; that span reads HDT. Catalysis depends on Asp-237, which acts as the Proton acceptor. Thr-259 contributes to the ATP binding site. Residue Asn-296 participates in substrate binding. Residue Gln-304 participates in ATP binding. The cysteines at positions 353 and 370 are disulfide-linked. Residue Gly-402 coordinates ATP. The cysteines at positions 413 and 417 are disulfide-linked.

Belongs to the rhamnulokinase family. In terms of assembly, monomer. The cofactor is Mg(2+).

The enzyme catalyses L-rhamnulose + ATP = L-rhamnulose 1-phosphate + ADP + H(+). Its pathway is carbohydrate degradation; L-rhamnose degradation; glycerone phosphate from L-rhamnose: step 2/3. Its function is as follows. Involved in the catabolism of L-rhamnose (6-deoxy-L-mannose). Catalyzes the transfer of the gamma-phosphate group from ATP to the 1-hydroxyl group of L-rhamnulose to yield L-rhamnulose 1-phosphate. The sequence is that of Rhamnulokinase from Escherichia coli O7:K1 (strain IAI39 / ExPEC).